The chain runs to 532 residues: Probable NAD kinase 1 (532 aa).

The segment covering 1–26 has biased composition (basic and acidic residues); sequence MSLDELPHKVSDERVNHDTVTSHESE. The tract at residues 1–32 is disordered; it reads MSLDELPHKVSDERVNHDTVTSHESEIGSGSI.

This sequence belongs to the NAD kinase family.

The enzyme catalyses NAD(+) + ATP = ADP + NADP(+) + H(+). The sequence is that of Probable NAD kinase 1 from Oryza sativa subsp. japonica (Rice).